A 243-amino-acid chain; its full sequence is 2-C-methyl-D-erythritol 4-phosphate cytidylyltransferase (243 aa).

The protein belongs to the IspD/TarI cytidylyltransferase family. IspD subfamily.

The enzyme catalyses 2-C-methyl-D-erythritol 4-phosphate + CTP + H(+) = 4-CDP-2-C-methyl-D-erythritol + diphosphate. It participates in isoprenoid biosynthesis; isopentenyl diphosphate biosynthesis via DXP pathway; isopentenyl diphosphate from 1-deoxy-D-xylulose 5-phosphate: step 2/6. Its function is as follows. Catalyzes the formation of 4-diphosphocytidyl-2-C-methyl-D-erythritol from CTP and 2-C-methyl-D-erythritol 4-phosphate (MEP). The protein is 2-C-methyl-D-erythritol 4-phosphate cytidylyltransferase of Colwellia psychrerythraea (strain 34H / ATCC BAA-681) (Vibrio psychroerythus).